A 311-amino-acid chain; its full sequence is Pyrimidine-specific ribonucleoside hydrolase RihA (311 aa).

Residue His240 is part of the active site.

It belongs to the IUNH family. RihA subfamily.

In terms of biological role, hydrolyzes cytidine or uridine to ribose and cytosine or uracil, respectively. This Salmonella gallinarum (strain 287/91 / NCTC 13346) protein is Pyrimidine-specific ribonucleoside hydrolase RihA.